We begin with the raw amino-acid sequence, 1030 residues long: LPS-assembly protein LptD (1030 aa).

The signal sequence occupies residues 1–32 (MEGPPTAAHAAAPLRTAVFLALAASWQQPAVA). Residues 50 to 213 (VAKRKDGGAD…APAGWTCKPQ (164 aa)) are disordered. Polar residues predominate over residues 78–91 (LSQSNRAAPSTAVS). A compositionally biased stretch (acidic residues) spans 126 to 137 (TEDEEDEESESA). Over residues 161 to 171 (GTPPARAPRPE) the composition is skewed to pro residues.

Belongs to the LptD family. Component of the lipopolysaccharide transport and assembly complex. Interacts with LptE and LptA.

It is found in the cell outer membrane. Its function is as follows. Together with LptE, is involved in the assembly of lipopolysaccharide (LPS) at the surface of the outer membrane. In Methylococcus capsulatus (strain ATCC 33009 / NCIMB 11132 / Bath), this protein is LPS-assembly protein LptD.